The following is a 197-amino-acid chain: Nucleoid occlusion factor SlmA (197 aa).

In terms of domain architecture, HTH tetR-type spans 7–67 (ISRREHILQC…GLIEFIEDSL (61 aa)). A DNA-binding region (H-T-H motif) is located at residues 30 to 49 (TTAKLAAEVGVSEAALYRHF).

The protein belongs to the nucleoid occlusion factor SlmA family. As to quaternary structure, homodimer. Interacts with FtsZ.

The protein localises to the cytoplasm. Its subcellular location is the nucleoid. In terms of biological role, required for nucleoid occlusion (NO) phenomenon, which prevents Z-ring formation and cell division over the nucleoid. Acts as a DNA-associated cell division inhibitor that binds simultaneously chromosomal DNA and FtsZ, and disrupts the assembly of FtsZ polymers. SlmA-DNA-binding sequences (SBS) are dispersed on non-Ter regions of the chromosome, preventing FtsZ polymerization at these regions. This Shewanella amazonensis (strain ATCC BAA-1098 / SB2B) protein is Nucleoid occlusion factor SlmA.